A 252-amino-acid polypeptide reads, in one-letter code: Geranylgeranylglyceryl phosphate synthase (252 aa).

2 residues coordinate Mg(2+): Asp25 and Ser54. Residues 174 to 180 (FMDAGSG), 205 to 206 (GG), and 227 to 228 (GN) each bind sn-glycerol 1-phosphate.

The protein belongs to the GGGP/HepGP synthase family. Group II subfamily. Homohexamer. Mg(2+) serves as cofactor.

It catalyses the reaction sn-glycerol 1-phosphate + (2E,6E,10E)-geranylgeranyl diphosphate = sn-3-O-(geranylgeranyl)glycerol 1-phosphate + diphosphate. Prenyltransferase that catalyzes the transfer of the geranylgeranyl moiety of geranylgeranyl diphosphate (GGPP) to the C3 hydroxyl of sn-glycerol-1-phosphate (G1P). The polypeptide is Geranylgeranylglyceryl phosphate synthase (Chitinophaga pinensis (strain ATCC 43595 / DSM 2588 / LMG 13176 / NBRC 15968 / NCIMB 11800 / UQM 2034)).